Reading from the N-terminus, the 324-residue chain is Reaction center protein M chain (324 aa).

Residues 2-51 (ADYQTIYTQIQARGPHITVSGEWGDNDRVGKPFYSYWLGKIGDAQIGPIY) lie on the Cytoplasmic side of the membrane. The helical transmembrane segment at 52–76 (LGASGIAAFAFGSTAILIILFNMAA) threads the bilayer. Over 77–110 (EVHFDPLQFFRQFFWLGLYPPKAQYGMGIPPLHD) the chain is Periplasmic. The chain crosses the membrane as a helical span at residues 111-137 (GGWWLMAGLFMTLSLGSWWIRVYSRAR). Residues 138–142 (ALGLG) lie on the Cytoplasmic side of the membrane. The chain crosses the membrane as a helical span at residues 143-166 (THIAWNFAAAIFFVLCIGCIHPTL). The Periplasmic portion of the chain corresponds to 167–197 (VGSWSEGVPFGIWPHIDWLTAFSIRYGNFYY). (7R,8Z)-bacteriochlorophyll b contacts are provided by His-181 and His-201. Residues 198 to 223 (CPWHGFSIGFAYGCGLLFAAHGATIL) form a helical membrane-spanning segment. Positions 218 and 233 each coordinate Fe cation. At 224–259 (AVARFGGDREIEQITDRGTAVERAALFWRWTIGFNA) the chain is on the cytoplasmic side. Trp-251 is a binding site for a ubiquinone. Residues 260–284 (TIESVHRWGWFFSLMVMVSASVGIL) traverse the membrane as a helical segment. His-265 contacts Fe cation. Residues 285–324 (LTGTFVDNWYLWCVKHGAAPDYPAYLPATPDPASLPGAPK) are Periplasmic-facing.

This sequence belongs to the reaction center PufL/M/PsbA/D family. In terms of assembly, reaction center is composed of four bacteriochlorophylls, two bacteriopheophytins, two ubiquinones, one iron, and three highly hydrophobic polypeptide chains (designated L, M, and H).

It localises to the cellular chromatophore membrane. Its function is as follows. The reaction center is a membrane-bound complex that mediates the initial photochemical event in the electron transfer process of photosynthesis. The protein is Reaction center protein M chain (pufM) of Blastochloris viridis (Rhodopseudomonas viridis).